An 829-amino-acid polypeptide reads, in one-letter code: Transcription activator GutR (829 aa).

The segment at residues Ile42–Gly61 is a DNA-binding region (H-T-H motif). Gly200–Thr207 is an ATP binding site. TPR repeat units follow at residues His697–Tyr730, Ile736–Ala769, and Ile775–Trp808.

Activator of the glucitol dehydrogenase gene (gutB). This is Transcription activator GutR (gutR) from Bacillus subtilis (strain 168).